The primary structure comprises 314 residues: L-lactate dehydrogenase 2 (314 aa).

NAD(+) is bound by residues Val-16, Asp-37, Lys-42, Tyr-68, and 82 to 83 (GL). Residues Gln-85, Arg-91, and 123 to 126 (NPVD) contribute to the substrate site. Residues 121 to 123 (ATN) and Ser-146 contribute to the NAD(+) site. 151–154 (DSAR) contacts substrate. 2 residues coordinate beta-D-fructose 1,6-bisphosphate: Arg-156 and His-171. The Proton acceptor role is filled by His-178. The residue at position 223 (Tyr-223) is a Phosphotyrosine. Thr-232 is a substrate binding site.

This sequence belongs to the LDH/MDH superfamily. LDH family. Homotetramer.

Its subcellular location is the cytoplasm. The catalysed reaction is (S)-lactate + NAD(+) = pyruvate + NADH + H(+). Its pathway is fermentation; pyruvate fermentation to lactate; (S)-lactate from pyruvate: step 1/1. Its activity is regulated as follows. Allosterically activated by fructose 1,6-bisphosphate (FBP). Functionally, catalyzes the conversion of lactate to pyruvate. The polypeptide is L-lactate dehydrogenase 2 (Bacillus cereus (strain ATCC 14579 / DSM 31 / CCUG 7414 / JCM 2152 / NBRC 15305 / NCIMB 9373 / NCTC 2599 / NRRL B-3711)).